The chain runs to 254 residues: 3-deoxy-manno-octulosonate cytidylyltransferase (254 aa).

The protein belongs to the KdsB family.

It is found in the cytoplasm. The catalysed reaction is 3-deoxy-alpha-D-manno-oct-2-ulosonate + CTP = CMP-3-deoxy-beta-D-manno-octulosonate + diphosphate. It functions in the pathway nucleotide-sugar biosynthesis; CMP-3-deoxy-D-manno-octulosonate biosynthesis; CMP-3-deoxy-D-manno-octulosonate from 3-deoxy-D-manno-octulosonate and CTP: step 1/1. Its function is as follows. Activates KDO (a required 8-carbon sugar) for incorporation into bacterial lipopolysaccharide in Gram-negative bacteria. This Lawsonia intracellularis (strain PHE/MN1-00) protein is 3-deoxy-manno-octulosonate cytidylyltransferase.